Here is a 109-residue protein sequence, read N- to C-terminus: Cell division protein ZapA (109 aa).

Positions 21–99 form a coiled coil; the sequence is PEQRDALNQA…IEQALLEQGR (79 aa).

The protein belongs to the ZapA family. Type 1 subfamily. In terms of assembly, homodimer. Interacts with FtsZ.

It is found in the cytoplasm. In terms of biological role, activator of cell division through the inhibition of FtsZ GTPase activity, therefore promoting FtsZ assembly into bundles of protofilaments necessary for the formation of the division Z ring. It is recruited early at mid-cell but it is not essential for cell division. In Klebsiella pneumoniae (strain 342), this protein is Cell division protein ZapA.